The following is a 317-amino-acid chain: Protoheme IX farnesyltransferase (317 aa).

9 helical membrane-spanning segments follow: residues 36 to 56 (VMVL…ATVN), 57 to 77 (PVIA…SGCL), 108 to 128 (LAFG…ASNW), 129 to 149 (LAAG…SMWL), 157 to 177 (IVIG…AVTG), 184 to 204 (LVLF…LALV), 230 to 247 (IVWY…PVWL), 251 to 273 (GWLY…VQVY), and 284 to 304 (AAMG…SALL).

The protein belongs to the UbiA prenyltransferase family. Protoheme IX farnesyltransferase subfamily.

The protein localises to the cell inner membrane. It carries out the reaction heme b + (2E,6E)-farnesyl diphosphate + H2O = Fe(II)-heme o + diphosphate. The protein operates within porphyrin-containing compound metabolism; heme O biosynthesis; heme O from protoheme: step 1/1. In terms of biological role, converts heme B (protoheme IX) to heme O by substitution of the vinyl group on carbon 2 of heme B porphyrin ring with a hydroxyethyl farnesyl side group. The sequence is that of Protoheme IX farnesyltransferase from Methylorubrum populi (strain ATCC BAA-705 / NCIMB 13946 / BJ001) (Methylobacterium populi).